A 242-amino-acid chain; its full sequence is tRNA (guanine-N(7)-)-methyltransferase (242 aa).

Residues glutamate 66, glutamate 91, aspartate 118, and aspartate 141 each coordinate S-adenosyl-L-methionine. The active site involves aspartate 141. Substrate is bound by residues lysine 145, aspartate 177, and 214–217 (TKFE).

This sequence belongs to the class I-like SAM-binding methyltransferase superfamily. TrmB family. Monomer.

It carries out the reaction guanosine(46) in tRNA + S-adenosyl-L-methionine = N(7)-methylguanosine(46) in tRNA + S-adenosyl-L-homocysteine. The protein operates within tRNA modification; N(7)-methylguanine-tRNA biosynthesis. Functionally, catalyzes the formation of N(7)-methylguanine at position 46 (m7G46) in tRNA. In Buchnera aphidicola subsp. Baizongia pistaciae (strain Bp), this protein is tRNA (guanine-N(7)-)-methyltransferase.